Consider the following 192-residue polypeptide: Small ribosomal subunit protein eS7 (192 aa).

The protein belongs to the eukaryotic ribosomal protein eS7 family.

In Anopheles gambiae (African malaria mosquito), this protein is Small ribosomal subunit protein eS7 (RpS7).